Consider the following 174-residue polypeptide: Probable nicotinate-nucleotide adenylyltransferase (174 aa).

This sequence belongs to the NadD family.

The catalysed reaction is nicotinate beta-D-ribonucleotide + ATP + H(+) = deamido-NAD(+) + diphosphate. The protein operates within cofactor biosynthesis; NAD(+) biosynthesis; deamido-NAD(+) from nicotinate D-ribonucleotide: step 1/1. In terms of biological role, catalyzes the reversible adenylation of nicotinate mononucleotide (NaMN) to nicotinic acid adenine dinucleotide (NaAD). The protein is Probable nicotinate-nucleotide adenylyltransferase of Helicobacter pylori (strain HPAG1).